Consider the following 322-residue polypeptide: MTASPSKLAQLRELSVVVADTGDYDAIKRLKPVDCTTNPTLVKKALDLPVYADLIERELAWGREHGGDDRTATVNEVADRLTIGVGVKLAELVPGRVSTEVDADLAHDTQATIAKARKFVAMYAERGVSKDKILIKIAATWEGIEAARQLQKEGIDCNLTLIFNRSQALACAEAGVFLISPFVGRILDYYVAQGQTPASIDEDPGVVFVRTVYNEFKQRGSSTVVMGASFRSTAQIEALAGCDRLTISPDLLEKLDAEHGELPRKLSPAKADNAQFTPIDSDSFASGLAADPMATEKLAGGIDTFAKDLHALRKTIADKLAG.

Lys136 acts as the Schiff-base intermediate with substrate in catalysis.

Belongs to the transaldolase family. Type 1 subfamily. Homodimer.

The protein resides in the cytoplasm. The enzyme catalyses D-sedoheptulose 7-phosphate + D-glyceraldehyde 3-phosphate = D-erythrose 4-phosphate + beta-D-fructose 6-phosphate. The protein operates within carbohydrate degradation; pentose phosphate pathway; D-glyceraldehyde 3-phosphate and beta-D-fructose 6-phosphate from D-ribose 5-phosphate and D-xylulose 5-phosphate (non-oxidative stage): step 2/3. Transaldolase is important for the balance of metabolites in the pentose-phosphate pathway. This Xanthomonas euvesicatoria pv. vesicatoria (strain 85-10) (Xanthomonas campestris pv. vesicatoria) protein is Transaldolase.